The primary structure comprises 165 residues: Protein SprT (165 aa).

Residues 22–163 enclose the SprT-like domain; it reads LAQANLKLDR…RCVHCGEPLV (142 aa). H78 is a binding site for Zn(2+). E79 is an active-site residue. H82 contacts Zn(2+).

It belongs to the SprT family. Requires Zn(2+) as cofactor.

The protein resides in the cytoplasm. This is Protein SprT from Salmonella paratyphi A (strain ATCC 9150 / SARB42).